Reading from the N-terminus, the 47-residue chain is Defensin-like protein 1 (47 aa).

Cystine bridges form between C5/C47, C16/C36, C22/C43, and C26/C45.

The protein belongs to the DEFL family.

Functionally, fabatins have antibacterial activity against Gram-positive and Gram-negative bacteria. High activity against P.aeruginosa. No activity against S.cerevisiae and C.albicans. In Vicia faba (Broad bean), this protein is Defensin-like protein 1.